Consider the following 424-residue polypeptide: Glutamyl-tRNA(Gln) amidotransferase subunit D (424 aa).

A disordered region spans residues 56–78 (GETANGSRNGGKGCKTNEEELPE). In terms of domain architecture, Asparaginase/glutaminase spans 84-413 (PKIAILSTGG…EKAAGMLRED (330 aa)). Active-site residues include Thr94, Thr170, Asp171, and Lys247.

It belongs to the asparaginase 1 family. GatD subfamily. As to quaternary structure, heterodimer of GatD and GatE.

The enzyme catalyses L-glutamyl-tRNA(Gln) + L-glutamine + ATP + H2O = L-glutaminyl-tRNA(Gln) + L-glutamate + ADP + phosphate + H(+). In terms of biological role, allows the formation of correctly charged Gln-tRNA(Gln) through the transamidation of misacylated Glu-tRNA(Gln) in organisms which lack glutaminyl-tRNA synthetase. The reaction takes place in the presence of glutamine and ATP through an activated gamma-phospho-Glu-tRNA(Gln). The GatDE system is specific for glutamate and does not act on aspartate. The protein is Glutamyl-tRNA(Gln) amidotransferase subunit D of Methanosarcina acetivorans (strain ATCC 35395 / DSM 2834 / JCM 12185 / C2A).